The following is a 143-amino-acid chain: Peptide methionine sulfoxide reductase MsrB (143 aa).

One can recognise a MsrB domain in the interval 16-139 (DAELRRRLTP…NSAALNFESR (124 aa)). 4 residues coordinate Zn(2+): cysteine 55, cysteine 58, cysteine 104, and cysteine 107. The active-site Nucleophile is the cysteine 128.

Belongs to the MsrB Met sulfoxide reductase family. Requires Zn(2+) as cofactor.

The enzyme catalyses L-methionyl-[protein] + [thioredoxin]-disulfide + H2O = L-methionyl-(R)-S-oxide-[protein] + [thioredoxin]-dithiol. This is Peptide methionine sulfoxide reductase MsrB from Burkholderia cenocepacia (strain HI2424).